The sequence spans 376 residues: Carbamoyl phosphate synthase small chain (376 aa).

The interval 1–183 is CPSase; that stretch reads MENILLNKAL…IYKKKYIEKN (183 aa). Ser-51, Gly-235, and Gly-237 together coordinate L-glutamine. The 188-residue stretch at 187–374 folds into the Glutamine amidotransferase type-1 domain; that stretch reads NIVAYDFGIK…INLVKDYRLN (188 aa). The active-site Nucleophile is Cys-263. 4 residues coordinate L-glutamine: Leu-264, Gln-267, Asn-305, and Phe-308. Residues His-347 and Glu-349 contribute to the active site.

Belongs to the CarA family. Composed of two chains; the small (or glutamine) chain promotes the hydrolysis of glutamine to ammonia, which is used by the large (or ammonia) chain to synthesize carbamoyl phosphate. Tetramer of heterodimers (alpha,beta)4.

The catalysed reaction is hydrogencarbonate + L-glutamine + 2 ATP + H2O = carbamoyl phosphate + L-glutamate + 2 ADP + phosphate + 2 H(+). It catalyses the reaction L-glutamine + H2O = L-glutamate + NH4(+). It participates in amino-acid biosynthesis; L-arginine biosynthesis; carbamoyl phosphate from bicarbonate: step 1/1. The protein operates within pyrimidine metabolism; UMP biosynthesis via de novo pathway; (S)-dihydroorotate from bicarbonate: step 1/3. In terms of biological role, small subunit of the glutamine-dependent carbamoyl phosphate synthetase (CPSase). CPSase catalyzes the formation of carbamoyl phosphate from the ammonia moiety of glutamine, carbonate, and phosphate donated by ATP, constituting the first step of 2 biosynthetic pathways, one leading to arginine and/or urea and the other to pyrimidine nucleotides. The small subunit (glutamine amidotransferase) binds and cleaves glutamine to supply the large subunit with the substrate ammonia. This is Carbamoyl phosphate synthase small chain from Wigglesworthia glossinidia brevipalpis.